The primary structure comprises 318 residues: NADH-ubiquinone oxidoreductase chain 1 (318 aa).

A run of 8 helical transmembrane segments spans residues 2 to 22, 70 to 90, 100 to 120, 147 to 167, 171 to 191, 217 to 237, 253 to 273, and 294 to 314; these read FMINVLLLIVPILLAVAFLTL, MFIIAPILALTLALTMWIPLP, LGILFMLAMSSLAVYSILWSG, AIILLSVLLMSGSFTLSTLII, YLWLIFPSWPLAMMWFISTLA, AGPFALFFLAEYANIIMMNIF, ELYSINFTIKALLLTCSFLWI, and LPLTLALCMWHVSLPIMLSSI.

This sequence belongs to the complex I subunit 1 family. In terms of assembly, core subunit of respiratory chain NADH dehydrogenase (Complex I) which is composed of 45 different subunits.

The protein resides in the mitochondrion inner membrane. It carries out the reaction a ubiquinone + NADH + 5 H(+)(in) = a ubiquinol + NAD(+) + 4 H(+)(out). Core subunit of the mitochondrial membrane respiratory chain NADH dehydrogenase (Complex I) which catalyzes electron transfer from NADH through the respiratory chain, using ubiquinone as an electron acceptor. Essential for the catalytic activity and assembly of complex I. The chain is NADH-ubiquinone oxidoreductase chain 1 (MT-ND1) from Equus caballus (Horse).